Reading from the N-terminus, the 326-residue chain is Zinc-dependent endopolyphosphatase (326 aa).

Topologically, residues 1–9 (MEDKRKRRA) are cytoplasmic. Residues 10 to 30 (ATLSTALILFVACCVYTLYIF) form a helical membrane-spanning segment. Residues 31 to 326 (KFDNPRLSPP…DYELIQVQCS (296 aa)) are Vacuolar-facing. Asn90 and Asn241 each carry an N-linked (GlcNAc...) asparagine glycan.

It belongs to the metallophosphoesterase superfamily. Interacts with PPN1. Requires Zn(2+) as cofactor. Co(2+) is required as a cofactor. Mg(2+) serves as cofactor.

It localises to the vacuole membrane. The catalysed reaction is [phosphate](n+1) + n H2O = (n+1) phosphate + n H(+). Its activity is regulated as follows. Not sensitive to heparin inhibition. In terms of biological role, catalyzes the hydrolysis of inorganic polyphosphate (polyP) chains of many hundreds of phosphate residues into shorter lengths. Exclusively shows endopolyphosphatase activity, cleaving inside the polyP chain. Together with PPN1, responsible for a substantial fraction of polyphosphatase activity that is necessary to mobilize polyP stores in response to phosphate scarcity. In Saccharomyces cerevisiae (strain ATCC 204508 / S288c) (Baker's yeast), this protein is Zinc-dependent endopolyphosphatase.